Reading from the N-terminus, the 730-residue chain is Elongation factor 2 (730 aa).

The tr-type G domain maps to 19–228 (QRIRNIGIVA…TGVSFKDVYD (210 aa)). Residues 28–35 (AHIDHGKT), 94–98 (DTPGH), and 148–151 (NKVD) contribute to the GTP site. Histidine 596 carries the diphthamide modification.

Belongs to the TRAFAC class translation factor GTPase superfamily. Classic translation factor GTPase family. EF-G/EF-2 subfamily.

Its subcellular location is the cytoplasm. Functionally, catalyzes the GTP-dependent ribosomal translocation step during translation elongation. During this step, the ribosome changes from the pre-translocational (PRE) to the post-translocational (POST) state as the newly formed A-site-bound peptidyl-tRNA and P-site-bound deacylated tRNA move to the P and E sites, respectively. Catalyzes the coordinated movement of the two tRNA molecules, the mRNA and conformational changes in the ribosome. This is Elongation factor 2 from Methanosarcina acetivorans (strain ATCC 35395 / DSM 2834 / JCM 12185 / C2A).